The sequence spans 1806 residues: Focadhesin (1806 aa).

The disordered stretch occupies residues 733 to 760 (ARPIPKQPEVEDEVKQNEEENEEEEDIS).

It localises to the cell junction. The protein localises to the focal adhesion. It is found in the cytoplasm. The protein resides in the cytosol. Its function is as follows. Required for the maintenance of SKIC2 and SKIC3 proteostatic levels in the liver. May be involved in the regulation of RNA degradation by the exosome complex. This chain is Focadhesin (focad), found in Danio rerio (Zebrafish).